A 357-amino-acid chain; its full sequence is Vomeronasal type-1 receptor 5 (357 aa).

Residues 1-3 are Extracellular-facing; that stretch reads MLK. Residues 4–24 traverse the membrane as a helical segment; it reads LVIIENMAEIMLFSLDLLLFS. Residues 25–52 lie on the Cytoplasmic side of the membrane; the sequence is TDILCFNFPSKMIKLPGFITIQIFFYPQ. Residues 53 to 73 form a helical membrane-spanning segment; it reads ASFGISANTILFLFHIFTFVF. The Extracellular segment spans residues 74-81; that stretch reads SHRSKSID. A helical transmembrane segment spans residues 82–102; it reads MIISHLSLIHILLLFTQAILV. The Cytoplasmic segment spans residues 103 to 130; sequence SLDFFGSQNTQDDLRCKVIVFLNKVMRG. A helical membrane pass occupies residues 131 to 151; it reads LSICTPCLLNVLQAIISPSIF. The Extracellular segment spans residues 152–163; it reads SLAKLKHPSASH. The chain crosses the membrane as a helical span at residues 164–184; it reads ILGFFLFSWVLNMFIGVIFCC. At 185-269 the chain is on the cytoplasmic side; sequence TLWLPPVKWG…PVSPVKRASQ (85 aa). The chain crosses the membrane as a helical span at residues 270–290; sequence TILLLVSFVFIYWVDFMFSFS. Over 291 to 300 the chain is Extracellular; it reads RGVTWINDSL. An N-linked (GlcNAc...) asparagine glycan is attached at N297. Residues 301 to 321 traverse the membrane as a helical segment; that stretch reads LVWFQVIVANSYATISPLMLI. Topologically, residues 322–357 are cytoplasmic; it reads YADNQIFKTLQMLWFKYLSPPKLMLKFNRQCGSTKK.

It belongs to the G-protein coupled receptor 1 family.

The protein localises to the cell membrane. Putative pheromone receptor. This is Vomeronasal type-1 receptor 5 (VN1R5) from Gorilla gorilla gorilla (Western lowland gorilla).